Here is a 600-residue protein sequence, read N- to C-terminus: NADH-quinone oxidoreductase subunit C/D (600 aa).

Residues 1 to 190 form an NADH dehydrogenase I subunit C region; it reads MIDLMPKKNT…EPFFLNEQKE (190 aa). The interval 214–600 is NADH dehydrogenase I subunit D; that stretch reads EFMFLNLGPN…IDFVMSDVDR (387 aa).

It in the N-terminal section; belongs to the complex I 30 kDa subunit family. In the C-terminal section; belongs to the complex I 49 kDa subunit family. As to quaternary structure, NDH-1 is composed of 13 different subunits. Subunits NuoB, CD, E, F, and G constitute the peripheral sector of the complex.

Its subcellular location is the cell membrane. It carries out the reaction a quinone + NADH + 5 H(+)(in) = a quinol + NAD(+) + 4 H(+)(out). Functionally, NDH-1 shuttles electrons from NADH, via FMN and iron-sulfur (Fe-S) centers, to quinones in the respiratory chain. The immediate electron acceptor for the enzyme in this species is believed to be ubiquinone. Couples the redox reaction to proton translocation (for every two electrons transferred, four hydrogen ions are translocated across the cytoplasmic membrane), and thus conserves the redox energy in a proton gradient. The chain is NADH-quinone oxidoreductase subunit C/D from Buchnera aphidicola subsp. Acyrthosiphon pisum (strain 5A).